The sequence spans 116 residues: UPF0342 protein lhv_1666 (116 aa).

The protein belongs to the UPF0342 family.

This Lactobacillus helveticus (strain DPC 4571) protein is UPF0342 protein lhv_1666.